Consider the following 479-residue polypeptide: Glutamate--tRNA ligase 2 (479 aa).

Positions 10-20 match the 'HIGH' region motif; the sequence is PSPTGSLHIGG. The short motif at 243-247 is the 'KMSKS' region element; the sequence is KLSKR. Lysine 246 lines the ATP pocket.

This sequence belongs to the class-I aminoacyl-tRNA synthetase family. Glutamate--tRNA ligase type 1 subfamily. In terms of assembly, monomer.

The protein localises to the cytoplasm. It carries out the reaction tRNA(Glu) + L-glutamate + ATP = L-glutamyl-tRNA(Glu) + AMP + diphosphate. Functionally, catalyzes the attachment of glutamate to tRNA(Glu) in a two-step reaction: glutamate is first activated by ATP to form Glu-AMP and then transferred to the acceptor end of tRNA(Glu). This Thermoanaerobacter pseudethanolicus (strain ATCC 33223 / 39E) (Clostridium thermohydrosulfuricum) protein is Glutamate--tRNA ligase 2.